The following is a 198-amino-acid chain: Ribonuclease HII (198 aa).

The RNase H type-2 domain occupies 2–192; it reads MYYCGIDEAG…IKKIIDNQKN (191 aa). A divalent metal cation contacts are provided by Asp8, Glu9, and Asp101.

Belongs to the RNase HII family. The cofactor is Mn(2+). Mg(2+) is required as a cofactor.

It localises to the cytoplasm. The enzyme catalyses Endonucleolytic cleavage to 5'-phosphomonoester.. Its function is as follows. Endonuclease that specifically degrades the RNA of RNA-DNA hybrids. The protein is Ribonuclease HII of Natranaerobius thermophilus (strain ATCC BAA-1301 / DSM 18059 / JW/NM-WN-LF).